The sequence spans 659 residues: DNA ligase (659 aa).

NAD(+)-binding positions include 32 to 36 (DAEYD), 81 to 82 (SL), and E110. Residue K112 is the N6-AMP-lysine intermediate of the active site. Positions 133, 168, 284, and 308 each coordinate NAD(+). Residues C402, C405, C420, and C425 each coordinate Zn(2+). The region spanning 582 to 659 (AKPQIFAGKS…SEEEFAELLP (78 aa)) is the BRCT domain.

The protein belongs to the NAD-dependent DNA ligase family. LigA subfamily. It depends on Mg(2+) as a cofactor. Mn(2+) serves as cofactor.

The catalysed reaction is NAD(+) + (deoxyribonucleotide)n-3'-hydroxyl + 5'-phospho-(deoxyribonucleotide)m = (deoxyribonucleotide)n+m + AMP + beta-nicotinamide D-nucleotide.. DNA ligase that catalyzes the formation of phosphodiester linkages between 5'-phosphoryl and 3'-hydroxyl groups in double-stranded DNA using NAD as a coenzyme and as the energy source for the reaction. It is essential for DNA replication and repair of damaged DNA. This is DNA ligase from Desulfitobacterium hafniense (strain DSM 10664 / DCB-2).